A 197-amino-acid chain; its full sequence is Imidazoleglycerol-phosphate dehydratase (197 aa).

This sequence belongs to the imidazoleglycerol-phosphate dehydratase family.

The protein resides in the cytoplasm. It catalyses the reaction D-erythro-1-(imidazol-4-yl)glycerol 3-phosphate = 3-(imidazol-4-yl)-2-oxopropyl phosphate + H2O. It participates in amino-acid biosynthesis; L-histidine biosynthesis; L-histidine from 5-phospho-alpha-D-ribose 1-diphosphate: step 6/9. In Thioalkalivibrio sulfidiphilus (strain HL-EbGR7), this protein is Imidazoleglycerol-phosphate dehydratase.